Reading from the N-terminus, the 145-residue chain is Leptin (145 aa).

A disulfide bridge links C95 with C145.

Belongs to the leptin family.

It localises to the secreted. Functionally, key player in the regulation of energy balance and body weight control. Once released into the circulation, has central and peripheral effects by binding LEPR, found in many tissues, which results in the activation of several major signaling pathways. The protein is Leptin (LEP) of Meleagris gallopavo (Wild turkey).